Here is a 526-residue protein sequence, read N- to C-terminus: Transcription factor kayak (526 aa).

2 disordered regions span residues P71–G165 and R178–A221. Low complexity-rich tracts occupy residues N78–G87 and I133–G153. Positions N154–G165 are enriched in gly residues. The span at R178 to T187 shows a compositional bias: polar residues. A bZIP domain is found at E208–H271. The interval K210–R229 is basic motif. Residues L236 to L264 form a leucine-zipper region. Low complexity predominate over residues G301–G322. Disordered stretches follow at residues G301–P345 and T504–L526. Positions T330–P340 are enriched in polar residues. Position 339 is a phosphoserine (S339).

This sequence belongs to the bZIP family. Fos subfamily. As to quaternary structure, homodimer. Heterodimer with Jra. The kay-Jra heterodimer binds more stably to the AP-1 site than either of the two proteins alone.

It is found in the nucleus. Functionally, developmentally regulated transcription factor AP-1 binds and recognizes the enhancer DNA sequence: 5'-TGA[CG]TCA-3'. May play a role in the function or determination of a particular subset of cells in the developing embryo. It is able to carry out its function either independently of or in conjunction with Jra. This is Transcription factor kayak from Drosophila persimilis (Fruit fly).